A 349-amino-acid chain; its full sequence is Prostaglandin reductase 1 (349 aa).

Phosphothreonine is present on Thr-18. Ser-20 is subject to Phosphoserine. NADP(+)-binding positions include 152-155 (GAVG), Lys-178, Tyr-193, Asn-217, 239-245 (CGAISMY), 270-272 (FIF), and Asn-321. Residue Lys-178 is modified to N6-(2-hydroxyisobutyryl)lysine; alternate. Position 178 is an N6-acetyllysine; alternate (Lys-178).

It belongs to the NADP-dependent oxidoreductase L4BD family. In terms of assembly, monomer or homodimer.

Its subcellular location is the cytoplasm. The catalysed reaction is 13,14-dihydro-15-oxo-prostaglandin E1 + NADP(+) = 15-oxoprostaglandin E1 + NADPH + H(+). It catalyses the reaction 13,14-dihydro-15-oxo-prostaglandin E2 + NADP(+) = 15-oxoprostaglandin E2 + NADPH + H(+). It carries out the reaction 13,14-dihydro-15-oxo-prostaglandin F1alpha + NADP(+) = 15-oxoprostaglandin F1alpha + NADPH + H(+). The enzyme catalyses 13,14-dihydro-15-oxo-PGF2alpha + NADP(+) = 15-oxoprostaglandin F2alpha + NADPH + H(+). The catalysed reaction is leukotriene B4 + NADP(+) = 12-oxo-leukotriene B4 + NADPH + H(+). It catalyses the reaction 20-hydroxy-leukotriene B4 + NADP(+) = 12-oxo-20-hydroxy-leukotriene B4 + NADPH + H(+). It carries out the reaction 6-trans-leukotriene B4 + NADP(+) = 12-oxo-(5S)-hydroxy-(6E,8E,10E,14Z)-eicosatetraenoate + NADPH + H(+). The enzyme catalyses (5S,12S)-dihydroxy-(6E,10E,12E,14Z)-eicosatetraenoate + NADP(+) = 12-oxo-(5S)-hydroxy-(6E,8E,10E,14Z)-eicosatetraenoate + NADPH + H(+). The catalysed reaction is an n-alkanal + NADP(+) = an alk-2-enal + NADPH + H(+). It catalyses the reaction hexanal + NADP(+) = (E)-hex-2-enal + NADPH + H(+). It carries out the reaction octanal + NADP(+) = (2E)-octenal + NADPH + H(+). The enzyme catalyses decanal + NADP(+) = (2E)-decenal + NADPH + H(+). The catalysed reaction is dodecanal + NADP(+) = (2E)-dodecenal + NADPH + H(+). It catalyses the reaction 4-hydroxynonanal + NADP(+) = (E)-4-hydroxynon-2-enal + NADPH + H(+). It carries out the reaction pentan-2-one + NADP(+) = (E)-pent-3-en-2-one + NADPH + H(+). The enzyme catalyses nonan-2-one + NADP(+) = (3E)-nonen-2-one + NADPH + H(+). Its function is as follows. NAD(P)H-dependent oxidoreductase involved in metabolic inactivation of pro- and anti-inflammatory eicosanoids: prostaglandins (PG), leukotrienes (LT) and lipoxins (LX). Catalyzes with high efficiency the reduction of the 13,14 double bond of 15-oxoPGs, including 15-oxo-PGE1, 15-oxo-PGE2, 15-oxo-PGF1-alpha and 15-oxo-PGF2-alpha. Catalyzes with lower efficiency the oxidation of the hydroxyl group at C12 of LTB4 and its derivatives, converting them into biologically less active 12-oxo-LTB4 metabolites. Reduces 15-oxo-LXA4 to 13,14 dihydro-15-oxo-LXA4, enhancing neutrophil recruitment at the inflammatory site. Plays a role in metabolic detoxification of alkenals and ketones. Reduces alpha,beta-unsaturated alkenals and ketones, particularly those with medium-chain length, showing highest affinity toward (2E)-decenal and (3E)-3-nonen-2-one. May inactivate 4-hydroxy-2-nonenal, a cytotoxic lipid constituent of oxidized low-density lipoprotein particles. The protein is Prostaglandin reductase 1 (PTGR1) of Oryctolagus cuniculus (Rabbit).